We begin with the raw amino-acid sequence, 596 residues long: Elongation factor 4 (596 aa).

One can recognise a tr-type G domain in the interval 2–184; that stretch reads KHIRNFSIIA…VIVEQIPPPE (183 aa). GTP-binding positions include 14–19 and 131–134; these read DHGKST and NKID.

It belongs to the TRAFAC class translation factor GTPase superfamily. Classic translation factor GTPase family. LepA subfamily.

It localises to the cell inner membrane. The enzyme catalyses GTP + H2O = GDP + phosphate + H(+). In terms of biological role, required for accurate and efficient protein synthesis under certain stress conditions. May act as a fidelity factor of the translation reaction, by catalyzing a one-codon backward translocation of tRNAs on improperly translocated ribosomes. Back-translocation proceeds from a post-translocation (POST) complex to a pre-translocation (PRE) complex, thus giving elongation factor G a second chance to translocate the tRNAs correctly. Binds to ribosomes in a GTP-dependent manner. The protein is Elongation factor 4 of Shewanella sp. (strain MR-7).